The sequence spans 219 residues: Uracil-DNA glycosylase (219 aa).

D61 acts as the Proton acceptor in catalysis.

It belongs to the uracil-DNA glycosylase (UDG) superfamily. UNG family.

It is found in the cytoplasm. It catalyses the reaction Hydrolyzes single-stranded DNA or mismatched double-stranded DNA and polynucleotides, releasing free uracil.. Its function is as follows. Excises uracil residues from the DNA which can arise as a result of misincorporation of dUMP residues by DNA polymerase or due to deamination of cytosine. In Haemophilus influenzae (strain PittEE), this protein is Uracil-DNA glycosylase.